We begin with the raw amino-acid sequence, 122 residues long: Large ribosomal subunit protein bL12 (122 aa).

Belongs to the bacterial ribosomal protein bL12 family. Homodimer. Part of the ribosomal stalk of the 50S ribosomal subunit. Forms a multimeric L10(L12)X complex, where L10 forms an elongated spine to which 2 to 4 L12 dimers bind in a sequential fashion. Binds GTP-bound translation factors.

Forms part of the ribosomal stalk which helps the ribosome interact with GTP-bound translation factors. Is thus essential for accurate translation. This Sulfurimonas denitrificans (strain ATCC 33889 / DSM 1251) (Thiomicrospira denitrificans (strain ATCC 33889 / DSM 1251)) protein is Large ribosomal subunit protein bL12.